The following is a 434-amino-acid chain: Ribosomal protein uS12 methylthiotransferase RimO (434 aa).

The MTTase N-terminal domain maps to S6–K122. [4Fe-4S] cluster contacts are provided by C15, C51, C85, C146, C150, and C153. Residues L132–A361 enclose the Radical SAM core domain. The TRAM domain maps to Q364 to L434.

Belongs to the methylthiotransferase family. RimO subfamily. Requires [4Fe-4S] cluster as cofactor.

The protein localises to the cytoplasm. The catalysed reaction is L-aspartate(89)-[ribosomal protein uS12]-hydrogen + (sulfur carrier)-SH + AH2 + 2 S-adenosyl-L-methionine = 3-methylsulfanyl-L-aspartate(89)-[ribosomal protein uS12]-hydrogen + (sulfur carrier)-H + 5'-deoxyadenosine + L-methionine + A + S-adenosyl-L-homocysteine + 2 H(+). In terms of biological role, catalyzes the methylthiolation of an aspartic acid residue of ribosomal protein uS12. In Chloroherpeton thalassium (strain ATCC 35110 / GB-78), this protein is Ribosomal protein uS12 methylthiotransferase RimO.